Here is a 385-residue protein sequence, read N- to C-terminus: tRNA-specific 2-thiouridylase MnmA (385 aa).

ATP is bound by residues 18–25 (AMSGGVDS) and Leu44. The Nucleophile role is filled by Cys112. A disulfide bridge links Cys112 with Cys209. Residue Gly136 coordinates ATP. The interval 159-161 (RDQ) is interaction with tRNA. Cys209 acts as the Cysteine persulfide intermediate in catalysis.

This sequence belongs to the MnmA/TRMU family.

It localises to the cytoplasm. The catalysed reaction is S-sulfanyl-L-cysteinyl-[protein] + uridine(34) in tRNA + AH2 + ATP = 2-thiouridine(34) in tRNA + L-cysteinyl-[protein] + A + AMP + diphosphate + H(+). Its function is as follows. Catalyzes the 2-thiolation of uridine at the wobble position (U34) of tRNA, leading to the formation of s(2)U34. The protein is tRNA-specific 2-thiouridylase MnmA of Methylorubrum populi (strain ATCC BAA-705 / NCIMB 13946 / BJ001) (Methylobacterium populi).